A 137-amino-acid chain; its full sequence is Large ribosomal subunit protein bL17 (137 aa).

The protein belongs to the bacterial ribosomal protein bL17 family. In terms of assembly, part of the 50S ribosomal subunit. Contacts protein L32.

The chain is Large ribosomal subunit protein bL17 from Caulobacter vibrioides (strain ATCC 19089 / CIP 103742 / CB 15) (Caulobacter crescentus).